The following is a 320-amino-acid chain: N-acetylneuraminate lyase (320 aa).

Thr51 and Thr52 together coordinate aceneuramate. The Proton donor role is filled by Tyr143. Lys173 serves as the catalytic Schiff-base intermediate with substrate. Ser175, Gly199, Asp201, Glu202, and Ser218 together coordinate aceneuramate.

The protein belongs to the DapA family. NanA subfamily. Homotetramer. Isoform 2 is expressed in placenta, liver, kidney, pancreas, spleen, thymus, ovary, small intestine and peripheral blood leukocyte.

It localises to the cytoplasm. It catalyses the reaction aceneuramate = aldehydo-N-acetyl-D-mannosamine + pyruvate. The protein operates within amino-sugar metabolism; N-acetylneuraminate degradation. Functionally, catalyzes the cleavage of N-acetylneuraminic acid (sialic acid) to form pyruvate and N-acetylmannosamine via a Schiff base intermediate. It prevents sialic acids from being recycled and returning to the cell surface. Involved in the N-glycolylneuraminic acid (Neu5Gc) degradation pathway. Although human is not able to catalyze formation of Neu5Gc due to the inactive CMAHP enzyme, Neu5Gc is present in food and must be degraded. This is N-acetylneuraminate lyase from Homo sapiens (Human).